Consider the following 66-residue polypeptide: Protein I177L (66 aa).

An N-linked (GlcNAc...) asparagine; by host glycan is attached at N11.

The protein belongs to the asfivirus I177L family.

The protein localises to the virion. This is Protein I177L from African swine fever virus (strain Badajoz 1971 Vero-adapted) (Ba71V).